Reading from the N-terminus, the 421-residue chain is MIVSVSRSSISGTVCAPPSKSYTHRAVLITALSDSGCVHRPLISADTRATISACDAFGADVKLRGDSLEIQGVSGAPRTPENVIDVLNSGTTLRFMSAVAALTDGAVLTGDSSIRSRPNGPLLKALNELGAEAFSIRGNDRAPLVIRGRLRGGSTSLDGSVSSQFLSALLIACPLSSGETTISIKGELKSRPYAEMTLDILRKAGAEICTDGDIFRMRGGQSYRLAEYTVPGDFSSASYPLAAAALAGSATVEGLFPSRQGDSAIVDILREMGAEVSWDMESGEVRVSGADLRGREIDASQTPDLVPTLAVLGAVAEGRTVIKNAEHVRHKETDRIHAMAVELKKMGANIRERPDGLEIDGGDLHGADLHGYHDHRIVMALTLAGIVAGDTRIDTAESVDVSYPGFFEDMRRLGANVRAST.

The 3-phosphoshikimate site is built by K20, S21, and R25. K20 is a phosphoenolpyruvate binding site. Phosphoenolpyruvate contacts are provided by G90 and R117. Residues S162, S163, Q164, S190, D304, and K331 each contribute to the 3-phosphoshikimate site. Q164 contacts phosphoenolpyruvate. Catalysis depends on D304, which acts as the Proton acceptor. Positions 335 and 376 each coordinate phosphoenolpyruvate.

Belongs to the EPSP synthase family. Monomer.

The protein localises to the cytoplasm. The catalysed reaction is 3-phosphoshikimate + phosphoenolpyruvate = 5-O-(1-carboxyvinyl)-3-phosphoshikimate + phosphate. It functions in the pathway metabolic intermediate biosynthesis; chorismate biosynthesis. In terms of biological role, catalyzes the transfer of the enolpyruvyl moiety of phosphoenolpyruvate (PEP) to the 5-hydroxyl of shikimate-3-phosphate (S3P) to produce enolpyruvyl shikimate-3-phosphate and inorganic phosphate. This chain is 3-phosphoshikimate 1-carboxyvinyltransferase, found in Methanothrix thermoacetophila (strain DSM 6194 / JCM 14653 / NBRC 101360 / PT) (Methanosaeta thermophila).